A 134-amino-acid chain; its full sequence is Large ribosomal subunit protein bL17 (134 aa).

It belongs to the bacterial ribosomal protein bL17 family. As to quaternary structure, part of the 50S ribosomal subunit. Contacts protein L32.

The chain is Large ribosomal subunit protein bL17 from Colwellia psychrerythraea (strain 34H / ATCC BAA-681) (Vibrio psychroerythus).